A 1217-amino-acid chain; its full sequence is ATP-dependent RNA helicase DHX30 (1217 aa).

2 positions are modified to phosphoserine: Asp-15 and Ser-29. Residues 76 to 144 (PKNLLNSVIG…QAAAAACQLF (69 aa)) form the DRBM domain. Positions 176–223 (WWRPEPTMPPTSWRQLNPENIRPGGPAGLSRSLGREEEEDEEEELEEG) are disordered. Acidic residues predominate over residues 211–223 (EEEEDEEEELEEG). Ser-249 and Ser-403 each carry phosphoserine. The Helicase ATP-binding domain maps to 467 to 635 (LSAIEQHPVV…FGGCPVIKVP (169 aa)). Position 480-487 (480-487 (GDTGCGKT)) interacts with ATP. A DEAH box motif is present at residues 582–585 (DEVH). In terms of domain architecture, Helicase C-terminal spans 677–850 (LVTDLVLHID…NLVLQAKIHM (174 aa)).

Belongs to the DEAD box helicase family. DEAH subfamily. As to quaternary structure, identified in a complex with TFAM and SSBP1. Interacts (via N-terminus) with ZC3HAV1 (via N-terminal domain) in an RNA-independent manner. Found in a complex with GRSF1, DDX28, FASTKD2 and FASTKD5. Post-translationally, phosphorylated on Ser-15. As to expression, expressed in the heart, brain, spleen, lung, liver, skeletal muscle, kidney, and testis. Expression is strongest in the testis and brain, while the lowest levels of expression are found in the spleen and lung.

It is found in the cytoplasm. The protein localises to the mitochondrion. It localises to the mitochondrion matrix. Its subcellular location is the mitochondrion nucleoid. The catalysed reaction is ATP + H2O = ADP + phosphate + H(+). RNA-dependent helicase. Plays an important role in the assembly of the mitochondrial large ribosomal subunit. Required for optimal function of the zinc-finger antiviral protein ZC3HAV1. Associates with mitochondrial DNA. Involved in nervous system development and differentiation through its involvement in the up-regulation of a number of genes which are required for neurogenesis, including GSC, NCAM1, neurogenin, and NEUROD. The chain is ATP-dependent RNA helicase DHX30 (Dhx30) from Mus musculus (Mouse).